The sequence spans 274 residues: Large ribosomal subunit protein uL2cy (274 aa).

2 disordered regions span residues 1-25 (MAIHLYKTSTPSTRNGTVDSQVKSN) and 223-274 (MNPV…RRSK). Polar residues predominate over residues 7-25 (KTSTPSTRNGTVDSQVKSN).

It belongs to the universal ribosomal protein uL2 family. In terms of assembly, part of the 50S ribosomal subunit.

It is found in the plastid. Its subcellular location is the chloroplast. This chain is Large ribosomal subunit protein uL2cy (rpl2-B), found in Atropa belladonna (Belladonna).